Consider the following 551-residue polypeptide: Calnexin homolog (551 aa).

The N-terminal stretch at 1–26 (MVDRKEIPLAMGLLAVLLFFVASSSS) is a signal peptide. Topologically, residues 27 to 480 (FHLVRASDEV…EKGEKQPNLT (454 aa)) are lumenal. Residues S44 and D75 each contribute to the Ca(2+) site. C118 and C153 are disulfide-bonded. Positions 122 and 124 each coordinate an alpha-D-glucoside. N140 carries an N-linked (GlcNAc...) asparagine glycan. An alpha-D-glucoside is bound by residues Y144 and D151. A disordered region spans residues 226-330 (ALIPSKTIPD…CGEWKRPTKS (105 aa)). The tract at residues 233–364 (IPDPDDKKPE…QEIPNPEYFE (132 aa)) is p domain (Extended arm). 2 stretches are compositionally biased toward basic and acidic residues: residues 234–269 (PDPDDKKPEDWDERAKIPDPEAVKPEDWDEDAPREI) and 276–295 (KPEPWLDHEPEVDDPEAKPE). Repeat copies occupy residues 235-246 (DPDDKKPEDWDE), 252-263 (DPEAVKPEDWDE), 271-282 (DEEAEKPEPWLD), 289-299 (DPEAKPEDWDD), and 303-313 (GEWEAPKIENP). 2 4 X approximate repeats regions span residues 235–299 (DPDD…DWDD) and 303–360 (GEWE…IPNP). Residues 296-305 (DWDDEEDGEW) show a composition bias toward acidic residues. A disulfide bond links C315 and C321. A run of 3 repeats spans residues 322–332 (GEWKRPTKSNP), 336–346 (GKWSAPYIDNP), and 350–360 (GIWKPQEIPNP). E379 lines the an alpha-D-glucoside pocket. Position 390 (D390) interacts with Ca(2+). A glycan (N-linked (GlcNAc...) asparagine) is linked at N478. The chain crosses the membrane as a helical span at residues 481–501 (IGIIVSVVIVFVSIFFRLIFG). Over 502 to 551 (GKKPANVEANVEKKKTNTETTSKQDGGEKEDNKEKEETANPPRRRPKRDN) the chain is Cytoplasmic. Positions 510–551 (ANVEKKKTNTETTSKQDGGEKEDNKEKEETANPPRRRPKRDN) are disordered. Residues 526-539 (DGGEKEDNKEKEET) show a composition bias toward basic and acidic residues.

Belongs to the calreticulin family. In terms of tissue distribution, in vegetative and flowering tissues.

The protein resides in the endoplasmic reticulum membrane. Calcium-binding protein that interacts with newly synthesized monoglucosylated glycoproteins in the endoplasmic reticulum. It may act in assisting protein assembly and/or in the retention within the ER of unassembled protein subunits. It seems to play a major role in the quality control apparatus of the ER by the retention of incorrectly folded proteins. This Pisum sativum (Garden pea) protein is Calnexin homolog.